A 693-amino-acid chain; its full sequence is MEKRGPKRRQQAAHLSCELCRERKVKCDKLDPCTNCSSAGVICVPVRRPRLPRGAHAQRLRRISPEDPEAPIQIDIASPPDTGTIAEDDLKERIRRLEALVDSMRSSNHISKQNQEAQDTIESTLNGIDDDSLLIKGPRVHPSDGGLRILGLSGSSSPETGWASIIEDRDISMQLCQVYLLNVDPVIKILHRPSLEKWMLQGQRYLGFPERHAAVESLGAAICYVAATSLTETQSWARFHTTKSSIVARARRTCETTLEKSSPLLSPEVTTLQAFLLYLVARRSEDPSRAVWTLMAFAVRIAKALDLPRGTDDNFFGQQMRKRLWLAICLLDFQTSLSQPSEPLITVAEATSSFSPPKHINDSDFEPTTSHDIPDREGLTDTTFSLVSYHVQAAGRLLNFEPSVKDNGSRQQHVQHFEQRTLRLLFYCDPESTPYAWFTWHRIQCFVSGARLSAIRPLIYQHGDHPIPIPDTNEGTSILSLALNILEKVQLVHTDPRGEGFRWFVTVPWQPLAIAISECYICQDRALVQRAWPIVEAAFQQHEADVSGSSKAISTTLERLMCRVRGKLLQSLGASTKITTSPTFGTTNAANTLSVPHTPPSRSSITSSGDLLSNWSWTTAELSRPGEDPALLTEALISTSPQKIDPLLFSLDSQLLIAGQEQLVEADQSWAAWEEVIASLHDDETGRADMFLS.

Positions 17-43 (CELCRERKVKCDKLDPCTNCSSAGVIC) form a DNA-binding region, zn(2)-C6 fungal-type. Residues 589–608 (AANTLSVPHTPPSRSSITSS) form a disordered region.

The protein localises to the nucleus. Transcription factor that specifically regulates the neosartoricin B biosynthesis gene cluster. The polypeptide is C6 finger domain transcription factor nscR (Trichophyton rubrum (strain ATCC MYA-4607 / CBS 118892) (Athlete's foot fungus)).